A 601-amino-acid polypeptide reads, in one-letter code: Elongation factor 4 (601 aa).

Residues 6 to 188 (SHIRNFSIIA…QIVHRVPPPE (183 aa)) enclose the tr-type G domain. GTP contacts are provided by residues 18–23 (DHGKST) and 135–138 (NKID).

The protein belongs to the TRAFAC class translation factor GTPase superfamily. Classic translation factor GTPase family. LepA subfamily.

The protein localises to the cell inner membrane. The catalysed reaction is GTP + H2O = GDP + phosphate + H(+). Its function is as follows. Required for accurate and efficient protein synthesis under certain stress conditions. May act as a fidelity factor of the translation reaction, by catalyzing a one-codon backward translocation of tRNAs on improperly translocated ribosomes. Back-translocation proceeds from a post-translocation (POST) complex to a pre-translocation (PRE) complex, thus giving elongation factor G a second chance to translocate the tRNAs correctly. Binds to ribosomes in a GTP-dependent manner. This Anaeromyxobacter dehalogenans (strain 2CP-C) protein is Elongation factor 4.